A 157-amino-acid polypeptide reads, in one-letter code: 6,7-dimethyl-8-ribityllumazine synthase (157 aa).

Residues F22, 57–59, and 81–83 each bind 5-amino-6-(D-ribitylamino)uracil; these read AYE and TVI. Residue 86–87 participates in (2S)-2-hydroxy-3-oxobutyl phosphate binding; it reads GT. H89 serves as the catalytic Proton donor. F114 lines the 5-amino-6-(D-ribitylamino)uracil pocket. R128 serves as a coordination point for (2S)-2-hydroxy-3-oxobutyl phosphate.

Belongs to the DMRL synthase family. Forms an icosahedral capsid composed of 60 subunits, arranged as a dodecamer of pentamers.

It catalyses the reaction (2S)-2-hydroxy-3-oxobutyl phosphate + 5-amino-6-(D-ribitylamino)uracil = 6,7-dimethyl-8-(1-D-ribityl)lumazine + phosphate + 2 H2O + H(+). It participates in cofactor biosynthesis; riboflavin biosynthesis; riboflavin from 2-hydroxy-3-oxobutyl phosphate and 5-amino-6-(D-ribitylamino)uracil: step 1/2. In terms of biological role, catalyzes the formation of 6,7-dimethyl-8-ribityllumazine by condensation of 5-amino-6-(D-ribitylamino)uracil with 3,4-dihydroxy-2-butanone 4-phosphate. This is the penultimate step in the biosynthesis of riboflavin. This chain is 6,7-dimethyl-8-ribityllumazine synthase, found in Haemophilus influenzae (strain ATCC 51907 / DSM 11121 / KW20 / Rd).